Reading from the N-terminus, the 318-residue chain is Putative HTH-type transcriptional regulatory protein TK0539 (318 aa).

The HTH cro/C1-type domain occupies 131-189 (LRELREKHGYSVNELAQLLGVSRKSLLNYERGEQAVSLDVAIQLEEIFDEALAEPIDIL). A DNA-binding region (H-T-H motif) is located at residues 142-161 (VNELAQLLGVSRKSLLNYER).

This Thermococcus kodakarensis (strain ATCC BAA-918 / JCM 12380 / KOD1) (Pyrococcus kodakaraensis (strain KOD1)) protein is Putative HTH-type transcriptional regulatory protein TK0539.